We begin with the raw amino-acid sequence, 382 residues long: Neuropeptide Y receptor type 1 (382 aa).

Residues 1-33 are Extracellular-facing; the sequence is MNSTLFSKVENHSIHYNASENSPLLAFENDDCH. Residues Asn2, Asn11, and Asn17 are each glycosylated (N-linked (GlcNAc...) asparagine). A helical membrane pass occupies residues 34–54; it reads LPLAVIFTLALAYGAVIILGV. Topologically, residues 55-75 are cytoplasmic; it reads SGNLALIIIILKQKEMRNVTN. A helical membrane pass occupies residues 76 to 96; it reads ILIVNLSFSDLLVAVMCLPFT. The Extracellular portion of the chain corresponds to 97–115; the sequence is FVYTLMDHWVFGETMCKLN. Residues Cys112 and Cys197 are joined by a disulfide bond. Residues 116-136 traverse the membrane as a helical segment; the sequence is PFVQCVSITVSIFSLVLIAVE. Residues 137 to 153 lie on the Cytoplasmic side of the membrane; that stretch reads RHQLIINPRGWRPNNRH. Residues 154 to 174 traverse the membrane as a helical segment; that stretch reads AYIGITVIWVLAVASSLPFVI. Residues 175 to 210 are Extracellular-facing; it reads YQILTDEPFQNVSLAAFKDKYVCFDKFPSDSHRLSY. The helical transmembrane segment at 211–231 threads the bilayer; that stretch reads TTLLLVLQYFGPLCFIFICYF. At 232–259 the chain is on the cytoplasmic side; sequence KIYIRLKRRNNMMDKIRDSKYRSSETKR. Residues 260–280 traverse the membrane as a helical segment; sequence INIMLLSIVVAFAVCWLPLTI. Residues 281 to 298 are Extracellular-facing; the sequence is FNTVFDWNHQIIATCNHN. The chain crosses the membrane as a helical span at residues 299–319; it reads LLFLLCHLTAMISTCVNPIFY. The Cytoplasmic segment spans residues 320–382; the sequence is GFLNKNFQRD…KISMNDNEKV (63 aa). A lipid anchor (S-palmitoyl cysteine) is attached at Cys337. A phosphoserine mark is found at Ser367 and Ser375.

The protein belongs to the G-protein coupled receptor 1 family. In terms of tissue distribution, the alpha form is highly expressed in the brain, heart, kidney, spleen, skeletal muscle, and lung, whereas the beta receptor mRNA was not detected in these tissues. However, the beta form is expressed in mouse embryonic developmental stage (7 and 11 days), bone marrow cells and several hematopoietic cell lines.

The protein localises to the cell membrane. Functionally, receptor for neuropeptide Y and peptide YY. The protein is Neuropeptide Y receptor type 1 (Npy1r) of Mus musculus (Mouse).